The sequence spans 430 residues: Long-chain specific acyl-CoA dehydrogenase, mitochondrial (430 aa).

Residues 1–30 (MATRLLRGSLRLWGGLCAPRLPTASRCSHS) constitute a mitochondrion transit peptide. The residue at position 42 (lysine 42) is an N6-acetyllysine. Serine 54 and serine 55 each carry phosphoserine. Residues lysine 66 and lysine 81 each carry the N6-acetyllysine; alternate modification. 2 positions are modified to N6-succinyllysine; alternate: lysine 66 and lysine 81. Residues lysine 92 and lysine 95 each carry the N6-acetyllysine modification. Lysine 165 is modified (N6-succinyllysine). FAD is bound by residues 170 to 179 (IAMTEPGAGS) and 203 to 205 (FIT). Residue serine 179 participates in substrate binding. Residue 227 to 228 (AH) coordinates substrate. The residue at position 240 (lysine 240) is an N6-succinyllysine. N6-acetyllysine; alternate occurs at positions 254 and 279. Lysine 254 and lysine 279 each carry N6-succinyllysine; alternate. Substrate contacts are provided by residues tyrosine 282 and 289 to 292 (PQER). The active-site Proton acceptor is the glutamate 291. Arginine 317 is an FAD binding site. Lysine 318 bears the N6-acetyllysine mark. Position 322 is an N6-acetyllysine; alternate (lysine 322). Lysine 322 is modified (N6-succinyllysine; alternate). Glutamine 328 contributes to the FAD binding site. Position 358 is an N6-acetyllysine (lysine 358). At serine 362 the chain carries Phosphoserine. 385–389 (QLHGG) is an FAD binding site. 412–413 (GG) is a substrate binding site. 414–416 (TNE) is an FAD binding site.

It belongs to the acyl-CoA dehydrogenase family. Homotetramer. FAD is required as a cofactor. Acetylation at Lys-318 and Lys-322 in proximity of the cofactor-binding sites strongly reduces catalytic activity. These sites are deacetylated by SIRT3.

Its subcellular location is the mitochondrion matrix. It carries out the reaction a long-chain 2,3-saturated fatty acyl-CoA + oxidized [electron-transfer flavoprotein] + H(+) = a long-chain (2E)-enoyl-CoA + reduced [electron-transfer flavoprotein]. The enzyme catalyses hexanoyl-CoA + oxidized [electron-transfer flavoprotein] + H(+) = (2E)-hexenoyl-CoA + reduced [electron-transfer flavoprotein]. The catalysed reaction is octanoyl-CoA + oxidized [electron-transfer flavoprotein] + H(+) = (2E)-octenoyl-CoA + reduced [electron-transfer flavoprotein]. It catalyses the reaction decanoyl-CoA + oxidized [electron-transfer flavoprotein] + H(+) = (2E)-decenoyl-CoA + reduced [electron-transfer flavoprotein]. It carries out the reaction dodecanoyl-CoA + oxidized [electron-transfer flavoprotein] + H(+) = (2E)-dodecenoyl-CoA + reduced [electron-transfer flavoprotein]. The enzyme catalyses tetradecanoyl-CoA + oxidized [electron-transfer flavoprotein] + H(+) = (2E)-tetradecenoyl-CoA + reduced [electron-transfer flavoprotein]. The catalysed reaction is oxidized [electron-transfer flavoprotein] + hexadecanoyl-CoA + H(+) = (2E)-hexadecenoyl-CoA + reduced [electron-transfer flavoprotein]. It catalyses the reaction octadecanoyl-CoA + oxidized [electron-transfer flavoprotein] + H(+) = (2E)-octadecenoyl-CoA + reduced [electron-transfer flavoprotein]. It carries out the reaction eicosanoyl-CoA + oxidized [electron-transfer flavoprotein] + H(+) = (2E)-eicosenoyl-CoA + reduced [electron-transfer flavoprotein]. The enzyme catalyses docosanoyl-CoA + oxidized [electron-transfer flavoprotein] + H(+) = (2E)-docosenoyl-CoA + reduced [electron-transfer flavoprotein]. The catalysed reaction is tetracosanoyl-CoA + oxidized [electron-transfer flavoprotein] + H(+) = (2E)-tetracosenoyl-CoA + reduced [electron-transfer flavoprotein]. It catalyses the reaction (5E)-tetradecenoyl-CoA + oxidized [electron-transfer flavoprotein] + H(+) = (2E,5E)-tetradecadienoyl-CoA + reduced [electron-transfer flavoprotein]. It carries out the reaction (5Z)-tetradecenoyl-CoA + oxidized [electron-transfer flavoprotein] + H(+) = (2E,5Z)-tetradecadienoyl-CoA + reduced [electron-transfer flavoprotein]. The enzyme catalyses oxidized [electron-transfer flavoprotein] + (9Z)-octadecenoyl-CoA + H(+) = (2E,9Z)-octadecadienoyl-CoA + reduced [electron-transfer flavoprotein]. The protein operates within lipid metabolism; mitochondrial fatty acid beta-oxidation. Long-chain specific acyl-CoA dehydrogenase is one of the acyl-CoA dehydrogenases that catalyze the first step of mitochondrial fatty acid beta-oxidation, an aerobic process breaking down fatty acids into acetyl-CoA and allowing the production of energy from fats. The first step of fatty acid beta-oxidation consists in the removal of one hydrogen from C-2 and C-3 of the straight-chain fatty acyl-CoA thioester, resulting in the formation of trans-2-enoyl-CoA. Among the different mitochondrial acyl-CoA dehydrogenases, long-chain specific acyl-CoA dehydrogenase can act on saturated and unsaturated acyl-CoAs with 6 to 24 carbons with a preference for 8 to 18 carbons long primary chains. This Sus scrofa (Pig) protein is Long-chain specific acyl-CoA dehydrogenase, mitochondrial.